The following is a 117-amino-acid chain: Biofilm growth-associated repressor (117 aa).

The region spanning 20–114 (AMEKRATEVA…ALYAIFCAPE (95 aa)) is the HTH arsR-type domain. Residues 54–77 (VGELEAKLDIRQPTLSQQLGVLRE) constitute a DNA-binding region (H-T-H motif).

In terms of biological role, represses an operon that comprises at least itself and blh. Binds to a palindromic AT-rich sequence spanning the -10 region of the blh promoter and blocks transcription of the operon. The chain is Biofilm growth-associated repressor (bigR) from Agrobacterium fabrum (strain C58 / ATCC 33970) (Agrobacterium tumefaciens (strain C58)).